The chain runs to 67 residues: Alpha-toxin Cn12 (67 aa).

The region spanning 1-66 (RDGYPLASNG…WGDSGTGPCR (66 aa)) is the LCN-type CS-alpha/beta domain. 4 cysteine pairs are disulfide-bonded: Cys11/Cys65, Cys15/Cys40, Cys25/Cys45, and Cys29/Cys47.

Expressed by the venom gland.

Its subcellular location is the secreted. Its function is as follows. Alpha toxins bind voltage-independently at site-3 of sodium channels (Nav) and inhibit the inactivation of the activated channels, thereby blocking neuronal transmission. This toxin binds, in vitro, to sodium channels and inhibits the inactivation of the activated channels. Seems not toxic to mice, crickets and sweet-water shrimps. This chain is Alpha-toxin Cn12, found in Centruroides noxius (Mexican scorpion).